Consider the following 329-residue polypeptide: MPILMPSAEVPTIDISPLSGDDAKAKQRVAQEINKAARGSGFFYASNHGVDVQLLQDVVNEFHRNMSDQEKHDLAINAYNKDNPHVRNGYYKAIKGKKAVESFCYLNPSFSDDHPMIKSETPMHEVNLWPDEEKHPRFRPFCEDYYRQLLRLSTVIMRGYALALGRREDFFDEALAEADTLSSVSLIRYPYLEEYPPVKTGADGTKLSFEDHLDVSMITVLYQTEVQNLQVETVDGWQDIPRSDEDFLVNCGTYMGHITHDYFPAPNHRVKFINAERLSLPFFLNAGHNSVIEPFVPEGAAGTVKNPTTSYGEYLQHGLRALIVKNGQT.

Residues arginine 87, tyrosine 91, serine 183, and tyrosine 189 each contribute to the isopenicillin N site. N-[(5S)-5-amino-5-carboxypentanoyl]-L-cysteinyl-D-valine is bound by residues arginine 87, tyrosine 91, serine 183, tyrosine 189, histidine 212, and aspartate 214. Residues 180 to 286 enclose the Fe2OG dioxygenase domain; sequence TLSSVSLIRY…RLSLPFFLNA (107 aa). Fe(2+) is bound by residues histidine 212, aspartate 214, and histidine 268. A 2-oxoglutarate-binding site is contributed by arginine 277. Serine 279 is an isopenicillin N binding site. Serine 279 contacts N-[(5S)-5-amino-5-carboxypentanoyl]-L-cysteinyl-D-valine.

It belongs to the iron/ascorbate-dependent oxidoreductase family. It depends on Fe cation as a cofactor. The cofactor is L-ascorbate.

It carries out the reaction N-[(5S)-5-amino-5-carboxypentanoyl]-L-cysteinyl-D-valine + O2 = isopenicillin N + 2 H2O. Its pathway is antibiotic biosynthesis; penicillin G biosynthesis; penicillin G from L-alpha-aminoadipate and L-cysteine and L-valine: step 2/3. Removes, in the presence of oxygen, 4 hydrogen atoms from delta-L-(alpha-aminoadipyl)-L-cysteinyl-D-valine (ACV) to form the azetidinone and thiazolidine rings of isopenicillin. The chain is Isopenicillin N synthase (pcbC) from Streptomyces jumonjinensis.